A 141-amino-acid chain; its full sequence is HTH-type transcriptional repressor NsrR (141 aa).

Residues 2–129 form the HTH rrf2-type domain; the sequence is QLTSFTDYGL…DNYTLADLVE (128 aa). Positions 28–51 form a DNA-binding region, H-T-H motif; sequence ISEVTDVYGVSRNHMVKIINQLSR. Residues C91, C96, and C102 each coordinate [2Fe-2S] cluster.

[2Fe-2S] cluster serves as cofactor.

In terms of biological role, nitric oxide-sensitive repressor of genes involved in protecting the cell against nitrosative stress. May require iron for activity. The chain is HTH-type transcriptional repressor NsrR from Escherichia fergusonii (strain ATCC 35469 / DSM 13698 / CCUG 18766 / IAM 14443 / JCM 21226 / LMG 7866 / NBRC 102419 / NCTC 12128 / CDC 0568-73).